The primary structure comprises 219 residues: Auxin-responsive protein IAA24 (219 aa).

Positions 24-28 (LCLRL) match the EAR-like (transcriptional repression) motif. Disordered regions lie at residues 24–88 (LCLR…AKAQ) and 109–128 (AAAA…QQGG). The segment covering 60–71 (STDSMASGTGTS) has biased composition (polar residues). One can recognise a PB1 domain in the interval 129–215 (GLYVKVSMDG…SCKKLRIMKG (87 aa)).

This sequence belongs to the Aux/IAA family. In terms of assembly, homodimers and heterodimers. In terms of tissue distribution, highly expressed in flowers. Expressed in seedlings.

Its subcellular location is the nucleus. In terms of biological role, aux/IAA proteins are short-lived transcriptional factors that function as repressors of early auxin response genes at low auxin concentrations. This chain is Auxin-responsive protein IAA24 (IAA24), found in Oryza sativa subsp. japonica (Rice).